The following is a 446-amino-acid chain: Histidine--tRNA ligase (446 aa).

It belongs to the class-II aminoacyl-tRNA synthetase family. Homodimer.

Its subcellular location is the cytoplasm. The catalysed reaction is tRNA(His) + L-histidine + ATP = L-histidyl-tRNA(His) + AMP + diphosphate + H(+). The chain is Histidine--tRNA ligase from Paraburkholderia xenovorans (strain LB400).